The sequence spans 222 residues: Small ribosomal subunit protein eS1 (222 aa).

This sequence belongs to the eukaryotic ribosomal protein eS1 family.

The polypeptide is Small ribosomal subunit protein eS1 (Methanocaldococcus jannaschii (strain ATCC 43067 / DSM 2661 / JAL-1 / JCM 10045 / NBRC 100440) (Methanococcus jannaschii)).